The primary structure comprises 573 residues: Potassium-transporting ATPase potassium-binding subunit (573 aa).

The next 10 membrane-spanning stretches (helical) occupy residues 3-23 (AEGL…TPLL), 65-85 (GYTL…YALL), 136-156 (GLTV…VALI), 179-199 (LYVL…QGVP), 254-274 (LTNL…IYSF), 286-306 (ALWT…WWAE), 383-403 (AGLY…GLMV), 423-443 (VIAV…TTVV), 489-509 (GLGL…LAIA), and 531-551 (LFIT…FFPA).

It belongs to the KdpA family. The system is composed of three essential subunits: KdpA, KdpB and KdpC.

It is found in the cell inner membrane. Part of the high-affinity ATP-driven potassium transport (or Kdp) system, which catalyzes the hydrolysis of ATP coupled with the electrogenic transport of potassium into the cytoplasm. This subunit binds the periplasmic potassium ions and delivers the ions to the membrane domain of KdpB through an intramembrane tunnel. The sequence is that of Potassium-transporting ATPase potassium-binding subunit from Rhodospirillum centenum (strain ATCC 51521 / SW).